The following is a 439-amino-acid chain: Enolase 2 (439 aa).

Substrate-binding residues include histidine 160 and glutamate 169. Glutamate 212 acts as the Proton donor in catalysis. Aspartate 247, glutamate 296, and aspartate 323 together coordinate Mg(2+). Substrate is bound by residues glutamate 296 and aspartate 323. The active-site Proton acceptor is the lysine 348. Substrate contacts are provided by residues 375–378 and lysine 399; that span reads SHRS.

This sequence belongs to the enolase family. As to quaternary structure, homodimer. Mg(2+) is required as a cofactor.

The protein resides in the cytoplasm. It carries out the reaction (2R)-2-phosphoglycerate = phosphoenolpyruvate + H2O. It functions in the pathway carbohydrate degradation; glycolysis; pyruvate from D-glyceraldehyde 3-phosphate: step 4/5. This is Enolase 2 (ENO2) from Debaryomyces hansenii (strain ATCC 36239 / CBS 767 / BCRC 21394 / JCM 1990 / NBRC 0083 / IGC 2968) (Yeast).